We begin with the raw amino-acid sequence, 400 residues long: Probable glycosyltransferase WbjE (400 aa).

This sequence belongs to the glycosyltransferase group 1 family. Glycosyltransferase 4 subfamily.

The protein operates within bacterial outer membrane biogenesis; LPS O-antigen biosynthesis. The chain is Probable glycosyltransferase WbjE (wbjE) from Pseudomonas aeruginosa.